The sequence spans 432 residues: MRVVILGSGVVGVASAWYLSQAGHEVTVIDRQPGPAEETSAANAGQISPGYAAPWAAPGVPLKAIKWMFQRHAPLAIGLDGTSFQLKWMWQMLRNCDTRHYMENKGRMVRLAEYSRDCLKALRDTTGIQYEGRQGGTLQLFRTAKQYENATRDIAVLEDAGVPYQLLEAKRLAEVEPALAEVSHKLTGGLRLPNDETGDCQLFTTRLAAMAEQAGVTFRFNTAVDALLQEGDRIAGVKCGDEIIKGDAYVMAFGSYSTAMLKGLVDIPVYPLKGYSLTIPIAQEDGAPVSTILDETYKIAITRFDQRIRVGGMAEIVGFNKALLQPRRETLEMVVRDLFPRGGHVEQATFWTGLRPMTPDGTPVVGRTAYKNLWLNTGHGTLGWTMACGSGQLISDLISGRTPAIPYDDLAVARYSPGFTPARPQHLHGAHN.

Position 3–17 (3–17 (VVILGSGVVGVASAW)) interacts with FAD.

This sequence belongs to the DadA oxidoreductase family. It depends on FAD as a cofactor.

It carries out the reaction a D-alpha-amino acid + A + H2O = a 2-oxocarboxylate + AH2 + NH4(+). It participates in amino-acid degradation; D-alanine degradation; NH(3) and pyruvate from D-alanine: step 1/1. Functionally, oxidative deamination of D-amino acids. In Klebsiella pneumoniae (strain 342), this protein is D-amino acid dehydrogenase.